The primary structure comprises 170 residues: MASLFASLGRSLIKLLIVLPVIIGLSISSPAMAAQWDAETLTVPAGSGGQQVTFSESEIKSASKLFKSNCATCHNQGVTKTNQNVGLDLEALSLASPARDNVDGLVEFLKNPMSYDGEYSIADTHPGISSSDVYVQMRTLNDEDLRLIAGYILTAEKVQGDQWGGGKIYF.

The signal sequence occupies residues 1 to 33 (MASLFASLGRSLIKLLIVLPVIIGLSISSPAMA). Residues Cys-70, Cys-73, His-74, and His-125 each coordinate heme c.

This sequence belongs to the cytochrome c family. PsbV subfamily. As to quaternary structure, PSII is composed of 1 copy each of membrane proteins PsbA, PsbB, PsbC, PsbD, PsbE, PsbF, PsbH, PsbI, PsbJ, PsbK, PsbL, PsbM, PsbT, PsbX, PsbY, Psb30/Ycf12, peripheral proteins PsbO, CyanoQ (PsbQ), PsbU, PsbV and a large number of cofactors. It forms dimeric complexes. Requires heme c as cofactor.

It is found in the cellular thylakoid membrane. In terms of biological role, one of the extrinsic, lumenal subunits of photosystem II (PSII). PSII is a light-driven water plastoquinone oxidoreductase, using light energy to abstract electrons from H(2)O, generating a proton gradient subsequently used for ATP formation. The extrinsic proteins stabilize the structure of photosystem II oxygen-evolving complex (OEC), the ion environment of oxygen evolution and protect the OEC against heat-induced inactivation. Low-potential cytochrome c that plays a role in the OEC of PSII. The protein is Photosystem II extrinsic protein V of Prochlorococcus marinus (strain MIT 9303).